The chain runs to 536 residues: Chromosomal replication initiator protein DnaA (536 aa).

Residues 1 to 72 (MNDFWQHCSA…DLARDFWNAP (72 aa)) form a domain I, interacts with DnaA modulators region. The tract at residues 72–199 (PIEVQFVLDP…EAADSMYERS (128 aa)) is domain II. Positions 97 to 121 (RAPLPAANPAPVTAGPAPSGAADAN) are disordered. The span at 105 to 121 (PAPVTAGPAPSGAADAN) shows a compositional bias: low complexity. The domain III, AAA+ region stretch occupies residues 200–416 (KLNPVLTFDN…GALRKILAYS (217 aa)). 4 residues coordinate ATP: G244, G246, K247, and T248. Positions 417 to 536 (KFHGREITIE…LHVLEQTLKG (120 aa)) are domain IV, binds dsDNA.

The protein belongs to the DnaA family. In terms of assembly, oligomerizes as a right-handed, spiral filament on DNA at oriC.

It localises to the cytoplasm. Functionally, plays an essential role in the initiation and regulation of chromosomal replication. ATP-DnaA binds to the origin of replication (oriC) to initiate formation of the DNA replication initiation complex once per cell cycle. Binds the DnaA box (a 9 base pair repeat at the origin) and separates the double-stranded (ds)DNA. Forms a right-handed helical filament on oriC DNA; dsDNA binds to the exterior of the filament while single-stranded (ss)DNA is stabiized in the filament's interior. The ATP-DnaA-oriC complex binds and stabilizes one strand of the AT-rich DNA unwinding element (DUE), permitting loading of DNA polymerase. After initiation quickly degrades to an ADP-DnaA complex that is not apt for DNA replication. Binds acidic phospholipids. The sequence is that of Chromosomal replication initiator protein DnaA from Burkholderia thailandensis (strain ATCC 700388 / DSM 13276 / CCUG 48851 / CIP 106301 / E264).